The following is a 150-amino-acid chain: Transcriptional repressor NrdR (150 aa).

The segment at 3–34 (CPFCGYEETKVLDSRPVSNGTSIRRRRECLQC) is a zinc-finger region. In terms of domain architecture, ATP-cone spans 49–139 (IRIIKKDGRR…VYKEFRDLDS (91 aa)).

This sequence belongs to the NrdR family. Zn(2+) serves as cofactor.

Its function is as follows. Negatively regulates transcription of bacterial ribonucleotide reductase nrd genes and operons by binding to NrdR-boxes. In Petrotoga mobilis (strain DSM 10674 / SJ95), this protein is Transcriptional repressor NrdR.